The following is a 429-amino-acid chain: Serine hydroxymethyltransferase (429 aa).

(6S)-5,6,7,8-tetrahydrofolate contacts are provided by residues Leu126 and 130–132 (GHL). Lys235 carries the N6-(pyridoxal phosphate)lysine modification. A (6S)-5,6,7,8-tetrahydrofolate-binding site is contributed by 359–361 (SPF).

It belongs to the SHMT family. In terms of assembly, homodimer. Pyridoxal 5'-phosphate serves as cofactor.

The protein resides in the cytoplasm. The enzyme catalyses (6R)-5,10-methylene-5,6,7,8-tetrahydrofolate + glycine + H2O = (6S)-5,6,7,8-tetrahydrofolate + L-serine. It participates in one-carbon metabolism; tetrahydrofolate interconversion. Its pathway is amino-acid biosynthesis; glycine biosynthesis; glycine from L-serine: step 1/1. Catalyzes the reversible interconversion of serine and glycine with tetrahydrofolate (THF) serving as the one-carbon carrier. This reaction serves as the major source of one-carbon groups required for the biosynthesis of purines, thymidylate, methionine, and other important biomolecules. Also exhibits THF-independent aldolase activity toward beta-hydroxyamino acids, producing glycine and aldehydes, via a retro-aldol mechanism. This Synechococcus sp. (strain CC9311) protein is Serine hydroxymethyltransferase.